We begin with the raw amino-acid sequence, 101 residues long: Enhancer of yellow 2 transcription factor (101 aa).

It belongs to the ENY2 family. In terms of assembly, component of the nuclear pore complex (NPC)-associated AMEX complex (anchoring and mRNA export complex), composed of at least e(y)2 and xmas-2. Component of the SAGA transcription coactivator-HAT complexes, at least composed of Ada2b, e(y)2, Pcaf/Gcn5, Taf10 and Nipped-A/Trrap. Within the SAGA complex, e(y)2, Sgf11, and not/nonstop form an additional subcomplex of SAGA called the DUB module (deubiquitination module). Component of the THO complex, composed of at least e(y)2, HPR1, THO2, THOC5, THOC6 and THOC7. Interacts with e(y)1. Interacts with su(Hw) (via zinc fingers). Interacts with xmas-2; required for localization to the nuclear periphery. Interacts with the nuclear pore complex (NPC).

It localises to the nucleus. The protein localises to the nucleoplasm. It is found in the cytoplasm. Involved in mRNA export coupled transcription activation by association with both the AMEX and the SAGA complexes. The SAGA complex is a multiprotein complex that activates transcription by remodeling chromatin and mediating histone acetylation and deubiquitination. Within the SAGA complex, participates in a subcomplex that specifically deubiquitinates histone H2B. The SAGA complex is recruited to specific gene promoters by activators, where it is required for transcription. Required for nuclear receptor-mediated transactivation. Involved in transcription elongation by recruiting the THO complex onto nascent mRNA. The AMEX complex functions in docking export-competent ribonucleoprotein particles (mRNPs) to the nuclear entrance of the nuclear pore complex (nuclear basket). AMEX participates in mRNA export and accurate chromatin positioning in the nucleus by tethering genes to the nuclear periphery. The chain is Enhancer of yellow 2 transcription factor from Drosophila simulans (Fruit fly).